The following is an 807-amino-acid chain: Dual specificity protein kinase YAK1 (807 aa).

A compositionally biased stretch (low complexity) spans 1 to 19; it reads MNSSNNNDSSSSNSNMNNS. The tract at residues 1–84 is disordered; that stretch reads MNSSNNNDSS…QQQQQQQQNS (84 aa). The span at 20–31 shows a compositional bias: polar residues; sequence LSPTLVTHSDAS. Ser38 is modified (phosphoserine). Low complexity predominate over residues 55–84; that stretch reads NQGSQRSPQQQHQNHHQQQQQQQQQQQQNS. 3 positions are modified to phosphoserine: Ser115, Ser118, and Ser127. The disordered stretch occupies residues 124–180; the sequence is RRKSSLVVPPARAPAPNPFQYDSYPAYTSSNTSLAGNSSGQYPSGYQQQQQQVYQQG. Positions 149-160 are enriched in polar residues; sequence AYTSSNTSLAGN. Positions 161-180 are enriched in low complexity; it reads SSGQYPSGYQQQQQQVYQQG. A Phosphoserine modification is found at Ser206. The segment covering 214–224 has biased composition (low complexity); that stretch reads SNFSSLNSNTN. Residues 214–254 form a disordered region; the sequence is SNFSSLNSNTNQGTNSIPVMSPYRRLSAYPPSTSPPLQPPF. Ser240, Ser245, and Ser247 each carry phosphoserine. Position 288 is a phosphothreonine (Thr288). Ser295 carries the post-translational modification Phosphoserine. A Protein kinase domain is found at 369–704; that stretch reads YLVLDILGQG…PQQAMLHPFI (336 aa). ATP-binding positions include 375–383 and Lys398; that span reads LGQGTFGQV. Asp496 acts as the Proton acceptor in catalysis. Tyr530 is modified (phosphotyrosine). Residues 714 to 758 are disordered; it reads FPPGSSLPGPSEKHDDAKGQQSEYGSANDSSNNAGHNYVYNPSSA. Over residues 732–758 the composition is skewed to polar residues; sequence GQQSEYGSANDSSNNAGHNYVYNPSSA.

It belongs to the protein kinase superfamily. CMGC Ser/Thr protein kinase family. MNB/DYRK subfamily. Post-translationally, phosphorylated; highly.

Its subcellular location is the cytoplasm. It is found in the nucleus. The enzyme catalyses L-seryl-[protein] + ATP = O-phospho-L-seryl-[protein] + ADP + H(+). It carries out the reaction L-threonyl-[protein] + ATP = O-phospho-L-threonyl-[protein] + ADP + H(+). The catalysed reaction is L-tyrosyl-[protein] + ATP = O-phospho-L-tyrosyl-[protein] + ADP + H(+). In terms of biological role, negative regulator of the cell cycle acting downstream of the cAMP-dependent protein kinase. Part of a glucose-sensing system involved in growth control in response to glucose availability. Phosphorylates POP2. The chain is Dual specificity protein kinase YAK1 (YAK1) from Saccharomyces cerevisiae (strain ATCC 204508 / S288c) (Baker's yeast).